A 714-amino-acid chain; its full sequence is Zinc finger matrin-type protein 1 (714 aa).

A Matrin-type 1 zinc finger spans residues 89 to 119 (NFCKPCGVVLQHESERISHFESEIHAQNVKF). Residues 172–214 (HYVGKSHSPTQNQSLEEHDQVSPSTCSPKMDEPNTTPAPPPFL) are disordered. The segment at 230–254 (YVCHICSITFTSLHMFRSHMQGTEH) adopts a Matrin-type 2 zinc-finger fold. The span at 417–434 (RERVDSEHRQRPCEERFS) shows a compositional bias: basic and acidic residues. 2 disordered regions span residues 417–469 (RERV…NDDF) and 571–714 (MPAS…ILGF). Composition is skewed to polar residues over residues 437-446 (APQTYQQEYS) and 575-588 (LSLS…SSYN). Positions 609 to 619 (SHRRRRQKRKR) are enriched in basic residues. Basic and acidic residues-rich tracts occupy residues 620-632 (HLEE…EKEQ) and 640-662 (SYQD…EDKA). The segment covering 669–678 (TKHRRKKRKH) has biased composition (basic residues).

It is found in the nucleus. This is Zinc finger matrin-type protein 1 (Zmat1) from Mus musculus (Mouse).